The chain runs to 196 residues: tRNA(Phe) 7-((3-amino-3-carboxypropyl)-4-demethylwyosine(37)-N(4))-methyltransferase 1 (196 aa).

This sequence belongs to the TYW3 family.

The enzyme catalyses 4-demethyl-7-[(3S)-3-amino-3-carboxypropyl]wyosine(37) in tRNA(Phe) + S-adenosyl-L-methionine = 7-[(3S)-3-amino-3-carboxypropyl]wyosine(37) in tRNA(Phe) + S-adenosyl-L-homocysteine + H(+). S-adenosyl-L-methionine-dependent methyltransferase that acts as a component of the wyosine derivatives biosynthesis pathway. Probably methylates N-4 position of wybutosine-86 to produce wybutosine-72. This Pyrococcus horikoshii (strain ATCC 700860 / DSM 12428 / JCM 9974 / NBRC 100139 / OT-3) protein is tRNA(Phe) 7-((3-amino-3-carboxypropyl)-4-demethylwyosine(37)-N(4))-methyltransferase 1.